The chain runs to 386 residues: Na(+)/H(+) antiporter NhaA (386 aa).

The next 10 membrane-spanning stretches (helical) occupy residues 10-30 (EFSI…NVAP), 45-65 (LSFH…IAAV), 84-104 (LNPL…YLAL), 116-136 (GWGI…RLIF), 142-162 (VIAF…VIIA), 169-189 (VLPV…IAFI), 261-281 (IIVD…GFSA), 287-307 (WLVF…FALL), 323-343 (HLLV…FVAG), and 358-378 (GAIL…LLGI).

This sequence belongs to the NhaA Na(+)/H(+) (TC 2.A.33) antiporter family.

It is found in the cell inner membrane. The catalysed reaction is Na(+)(in) + 2 H(+)(out) = Na(+)(out) + 2 H(+)(in). Na(+)/H(+) antiporter that extrudes sodium in exchange for external protons. This Geotalea uraniireducens (strain Rf4) (Geobacter uraniireducens) protein is Na(+)/H(+) antiporter NhaA.